Reading from the N-terminus, the 281-residue chain is Bifunctional protein FolD (281 aa).

Residues 159–161, Ser184, and Ile225 contribute to the NADP(+) site; that span reads NRS.

The protein belongs to the tetrahydrofolate dehydrogenase/cyclohydrolase family. As to quaternary structure, homodimer.

It carries out the reaction (6R)-5,10-methylene-5,6,7,8-tetrahydrofolate + NADP(+) = (6R)-5,10-methenyltetrahydrofolate + NADPH. The catalysed reaction is (6R)-5,10-methenyltetrahydrofolate + H2O = (6R)-10-formyltetrahydrofolate + H(+). Its pathway is one-carbon metabolism; tetrahydrofolate interconversion. Catalyzes the oxidation of 5,10-methylenetetrahydrofolate to 5,10-methenyltetrahydrofolate and then the hydrolysis of 5,10-methenyltetrahydrofolate to 10-formyltetrahydrofolate. This is Bifunctional protein FolD from Thermoplasma volcanium (strain ATCC 51530 / DSM 4299 / JCM 9571 / NBRC 15438 / GSS1).